Consider the following 227-residue polypeptide: 7-cyano-7-deazaguanine synthase (227 aa).

Residue 8-18 (LSGGLDSATVL) coordinates ATP. Zn(2+)-binding residues include Cys-191, Cys-201, Cys-204, and Cys-207.

It belongs to the QueC family. Zn(2+) is required as a cofactor.

It catalyses the reaction 7-carboxy-7-deazaguanine + NH4(+) + ATP = 7-cyano-7-deazaguanine + ADP + phosphate + H2O + H(+). Its pathway is purine metabolism; 7-cyano-7-deazaguanine biosynthesis. Catalyzes the ATP-dependent conversion of 7-carboxy-7-deazaguanine (CDG) to 7-cyano-7-deazaguanine (preQ(0)). The polypeptide is 7-cyano-7-deazaguanine synthase (Paramagnetospirillum magneticum (strain ATCC 700264 / AMB-1) (Magnetospirillum magneticum)).